Here is a 318-residue protein sequence, read N- to C-terminus: ZAR1-like protein (318 aa).

Positions 149-211 are disordered; that stretch reads LSDPPEAGQP…PVDSSQPLGR (63 aa). A compositionally biased stretch (pro residues) spans 155–169; that stretch reads AGQPPPPLPPPSPPP. Residues 219–304 form a 3CxxC-type zinc finger; that stretch reads PKYGYFHCKD…QELCGRCKDK (86 aa).

It belongs to the ZAR1 family. As to quaternary structure, interacts with YBX2.

The protein resides in the cytoplasm. It localises to the cytoplasmic ribonucleoprotein granule. Functionally, mRNA-binding protein required for maternal mRNA storage, translation and degradation during oocyte maturation. Probably promotes formation of some phase-separated membraneless compartment that stores maternal mRNAs in oocytes: acts by undergoing liquid-liquid phase separation upon binding to maternal mRNAs. Binds to the 3'-UTR of maternal mRNAs, inhibiting their translation. This is ZAR1-like protein (ZAR1L) from Bos taurus (Bovine).